The primary structure comprises 36 residues: ACENNFSDRECERRKKDCDSSMKFRELSCPKTCGTC.

The ShKT domain occupies 2–36; sequence CENNFSDRECERRKKDCDSSMKFRELSCPKTCGTC. 3 cysteine pairs are disulfide-bonded: Cys2–Cys36, Cys11–Cys29, and Cys18–Cys33.

Belongs to the sea anemone type 1 potassium channel toxin family. Type 1a subfamily. As to expression, predominantly expressed in mesenterial filaments (at protein level), a morphological structure that has a functional role in prey killing and digestion. Also expressed in club-tips, tentacles, actinopharynx, body column, mesenterial filaments and pedal disk.

It localises to the secreted. It is found in the nematocyst. Probable toxin with unknown function. Does not inhibit all channels tested. Is not cytotoxic on macrophage. The polypeptide is Kappa-isophellitoxin-Tst1a (Telmatactis stephensoni (Sea anemone)).